The chain runs to 283 residues: 4-diphosphocytidyl-2-C-methyl-D-erythritol kinase (283 aa).

Lys10 is a catalytic residue. An ATP-binding site is contributed by 95-105; that stretch reads PVAAGLGGGSS. The active site involves Asp137.

Belongs to the GHMP kinase family. IspE subfamily.

It catalyses the reaction 4-CDP-2-C-methyl-D-erythritol + ATP = 4-CDP-2-C-methyl-D-erythritol 2-phosphate + ADP + H(+). The protein operates within isoprenoid biosynthesis; isopentenyl diphosphate biosynthesis via DXP pathway; isopentenyl diphosphate from 1-deoxy-D-xylulose 5-phosphate: step 3/6. Functionally, catalyzes the phosphorylation of the position 2 hydroxy group of 4-diphosphocytidyl-2C-methyl-D-erythritol. In Limosilactobacillus fermentum (strain NBRC 3956 / LMG 18251) (Lactobacillus fermentum), this protein is 4-diphosphocytidyl-2-C-methyl-D-erythritol kinase.